The chain runs to 247 residues: Small ribosomal subunit protein uS3 (247 aa).

A KH type-2 domain is found at 39–107 (VRDYLRKKLD…PAQVNIEEIT (69 aa)). The interval 213–247 (SVYNPPKEDKTRAPKRRGRSNSNRRNSDRANTDRG) is disordered. Positions 237-247 (RNSDRANTDRG) are enriched in basic and acidic residues.

This sequence belongs to the universal ribosomal protein uS3 family. In terms of assembly, part of the 30S ribosomal subunit. Forms a tight complex with proteins S10 and S14.

Its function is as follows. Binds the lower part of the 30S subunit head. Binds mRNA in the 70S ribosome, positioning it for translation. The polypeptide is Small ribosomal subunit protein uS3 (Psychrobacter sp. (strain PRwf-1)).